Consider the following 278-residue polypeptide: Large ribosomal subunit protein uL2 (278 aa).

The interval 208-278 is disordered; it reads AGRSRWMGKR…LIIRHRKGRK (71 aa). A compositionally biased stretch (basic residues) spans 209–219; that stretch reads GRSRWMGKRPQ. Residues 258–270 show a composition bias toward basic and acidic residues; it reads KTRDSKKASEKLI.

It belongs to the universal ribosomal protein uL2 family. In terms of assembly, part of the 50S ribosomal subunit. Forms a bridge to the 30S subunit in the 70S ribosome.

One of the primary rRNA binding proteins. Required for association of the 30S and 50S subunits to form the 70S ribosome, for tRNA binding and peptide bond formation. It has been suggested to have peptidyltransferase activity; this is somewhat controversial. Makes several contacts with the 16S rRNA in the 70S ribosome. The chain is Large ribosomal subunit protein uL2 from Lactobacillus delbrueckii subsp. bulgaricus (strain ATCC 11842 / DSM 20081 / BCRC 10696 / JCM 1002 / NBRC 13953 / NCIMB 11778 / NCTC 12712 / WDCM 00102 / Lb 14).